Consider the following 804-residue polypeptide: ABC transporter aclQ (804 aa).

A run of 9 helical transmembrane segments spans residues 3–23 (LAVL…ISYL), 52–72 (FTAI…SITI), 97–117 (IAVF…PFSP), 119–139 (LSHS…LAMF), 155–175 (LQLG…ALYF), 206–226 (HGGW…LWPS), 239–259 (FVLL…LGIV), 349–369 (LVFQ…YFLI), and 373–393 (AFYS…TIYM). One can recognise an ABC transmembrane type-1 domain in the interval 236-518 (IFCFVLLVIQ…FGSFYTQVQN (283 aa)). An N-linked (GlcNAc...) asparagine glycan is attached at N460. The next 2 helical transmembrane spans lie at 464–484 (NLLF…QISA) and 489–509 (VAMF…LNFF). An ABC transporter domain is found at 552–786 (VEFTHVNFAY…NGMYSQMWAK (235 aa)). 585 to 592 (GESGSGKS) is a binding site for ATP. Residues N639 and N797 are each glycosylated (N-linked (GlcNAc...) asparagine).

It belongs to the ABC transporter superfamily. ABCB family. Heavy Metal importer (TC 3.A.1.210) subfamily.

The protein localises to the membrane. ABC transporter; part of the gene cluster that mediates the biosynthesis of aspirochlorine (or antibiotic A30641), an unusual halogenated spiro compound with distinctive antifungal properties due to selective inhibition of protein biosynthesis, and which is also active against bacteria, viruses, and murine tumor cells. In Aspergillus oryzae (strain ATCC 42149 / RIB 40) (Yellow koji mold), this protein is ABC transporter aclQ.